The primary structure comprises 278 residues: HTH-type transcriptional activator RhaS (278 aa).

Residues 174 to 272 (NLLLAWLEDH…NWSPRDIRQG (99 aa)) enclose the HTH araC/xylS-type domain. 2 DNA-binding regions (H-T-H motif) span residues 191 to 212 (DAVA…KQQT) and 239 to 262 (VTDI…RREF).

In terms of assembly, binds DNA as a dimer.

Its subcellular location is the cytoplasm. Its function is as follows. Activates expression of the rhaBAD and rhaT operons. This chain is HTH-type transcriptional activator RhaS, found in Escherichia coli O127:H6 (strain E2348/69 / EPEC).